Here is a 439-residue protein sequence, read N- to C-terminus: Ribosomal protein uS12 methylthiotransferase RimO (439 aa).

Positions 5–116 constitute an MTTase N-terminal domain; that stretch reads PTIAISHLGC…IVNVIERVEL (112 aa). [4Fe-4S] cluster-binding residues include cysteine 14, cysteine 50, cysteine 79, cysteine 154, cysteine 158, and cysteine 161. The region spanning 140–369 is the Radical SAM core domain; it reads TTTEGVAYLR…MELQQPISQK (230 aa). The region spanning 372–438 is the TRAM domain; that stretch reads QQEVGKIVDV…TYDLYGQVVN (67 aa).

This sequence belongs to the methylthiotransferase family. RimO subfamily. The cofactor is [4Fe-4S] cluster.

The protein resides in the cytoplasm. The catalysed reaction is L-aspartate(89)-[ribosomal protein uS12]-hydrogen + (sulfur carrier)-SH + AH2 + 2 S-adenosyl-L-methionine = 3-methylsulfanyl-L-aspartate(89)-[ribosomal protein uS12]-hydrogen + (sulfur carrier)-H + 5'-deoxyadenosine + L-methionine + A + S-adenosyl-L-homocysteine + 2 H(+). Its function is as follows. Catalyzes the methylthiolation of an aspartic acid residue of ribosomal protein uS12. The protein is Ribosomal protein uS12 methylthiotransferase RimO of Nostoc punctiforme (strain ATCC 29133 / PCC 73102).